Reading from the N-terminus, the 2304-residue chain is Protein Ycf2 (2304 aa).

1637–1644 contacts ATP; the sequence is GSIGTGRS.

It belongs to the Ycf2 family.

The protein resides in the plastid. The protein localises to the chloroplast stroma. Functionally, probable ATPase of unknown function. Its presence in a non-photosynthetic plant (Epifagus virginiana) and experiments in tobacco indicate that it has an essential function which is probably not related to photosynthesis. The sequence is that of Protein Ycf2 from Amborella trichopoda.